A 122-amino-acid chain; its full sequence is Large ribosomal subunit protein uL14 (122 aa).

The protein belongs to the universal ribosomal protein uL14 family. Part of the 50S ribosomal subunit. Forms a cluster with proteins L3 and L19. In the 70S ribosome, L14 and L19 interact and together make contacts with the 16S rRNA in bridges B5 and B8.

Binds to 23S rRNA. Forms part of two intersubunit bridges in the 70S ribosome. The chain is Large ribosomal subunit protein uL14 from Ureaplasma parvum serovar 3 (strain ATCC 27815 / 27 / NCTC 11736).